A 305-amino-acid polypeptide reads, in one-letter code: Sulfate adenylyltransferase subunit 2 (305 aa).

The segment at 283–305 (RQGRVIDHDQSASMEKKKQEGYF) is disordered.

It belongs to the PAPS reductase family. CysD subfamily. In terms of assembly, heterodimer composed of CysD, the smaller subunit, and CysN.

It catalyses the reaction sulfate + ATP + H(+) = adenosine 5'-phosphosulfate + diphosphate. The protein operates within sulfur metabolism; hydrogen sulfide biosynthesis; sulfite from sulfate: step 1/3. Functionally, with CysN forms the ATP sulfurylase (ATPS) that catalyzes the adenylation of sulfate producing adenosine 5'-phosphosulfate (APS) and diphosphate, the first enzymatic step in sulfur assimilation pathway. APS synthesis involves the formation of a high-energy phosphoric-sulfuric acid anhydride bond driven by GTP hydrolysis by CysN coupled to ATP hydrolysis by CysD. This is Sulfate adenylyltransferase subunit 2 from Caulobacter sp. (strain K31).